The chain runs to 332 residues: Oxygen-dependent coproporphyrinogen-III oxidase (332 aa).

Ser-119 contacts coproporphyrinogen III. His-133 serves as the catalytic Proton donor. Coproporphyrinogen III-binding positions include 135–137 (NVR) and 284–285 (GR).

The protein belongs to the aerobic coproporphyrinogen-III oxidase family. As to quaternary structure, homodimer.

The enzyme catalyses coproporphyrinogen III + O2 + 2 H(+) = protoporphyrinogen IX + 2 CO2 + 2 H2O. It functions in the pathway porphyrin-containing compound metabolism; protoporphyrin-IX biosynthesis; protoporphyrinogen-IX from coproporphyrinogen-III (O2 route): step 1/1. Its function is as follows. Involved in the heme biosynthesis. Catalyzes the aerobic oxidative decarboxylation of propionate groups of rings A and B of coproporphyrinogen-III to yield the vinyl groups in protoporphyrinogen-IX. This Dictyostelium discoideum (Social amoeba) protein is Oxygen-dependent coproporphyrinogen-III oxidase (cpox).